Consider the following 860-residue polypeptide: DNA mismatch repair protein MutS (860 aa).

607 to 614 (GPNMSGKS) is an ATP binding site.

Belongs to the DNA mismatch repair MutS family.

Functionally, this protein is involved in the repair of mismatches in DNA. It is possible that it carries out the mismatch recognition step. This protein has a weak ATPase activity. The protein is DNA mismatch repair protein MutS of Listeria monocytogenes serotype 4a (strain HCC23).